Consider the following 598-residue polypeptide: Probable transporter mch1 (598 aa).

Residues 1–49 (MASPTPAPRPDQISASTPLLQSDSTSSCASSIRSLSPSRRRHRNGRTSP) form a disordered region. Residues 22–37 (SDSTSSCASSIRSLSP) show a composition bias toward low complexity. N57 carries an N-linked (GlcNAc...) asparagine glycan. 6 consecutive transmembrane segments (helical) span residues 63–83 (ALLS…GHIF), 96–116 (GLSS…GYMC), 122–142 (GPLS…AAGV), 164–184 (LAYA…CSMY), 202–222 (GLAL…QSQL), and 241–261 (VFHF…LGTF). A disordered region spans residues 315–334 (AGILDPSKPDNDSDSEEEDD). N325 carries N-linked (GlcNAc...) asparagine glycosylation. 6 helical membrane-spanning segments follow: residues 355–375 (HTMW…EAFI), 405–425 (IVGI…DLLA), 453–473 (FLLF…SGWI), 486–506 (LVGA…TVIW), 516–536 (GIVA…YSAV), and 565–585 (SAFW…LWAW).

Belongs to the major facilitator superfamily.

It localises to the vacuole membrane. Probable transporter. The sequence is that of Probable transporter mch1 (mch1) from Neurospora crassa (strain ATCC 24698 / 74-OR23-1A / CBS 708.71 / DSM 1257 / FGSC 987).